The primary structure comprises 324 residues: Beta-ketoacyl-[acyl-carrier-protein] synthase III (324 aa).

Active-site residues include Cys-114 and His-251. The ACP-binding stretch occupies residues 252 to 256 (QANRR). Asn-281 is a catalytic residue.

The protein belongs to the thiolase-like superfamily. FabH family. In terms of assembly, homodimer.

It localises to the cytoplasm. It carries out the reaction malonyl-[ACP] + acetyl-CoA + H(+) = 3-oxobutanoyl-[ACP] + CO2 + CoA. It functions in the pathway lipid metabolism; fatty acid biosynthesis. Catalyzes the condensation reaction of fatty acid synthesis by the addition to an acyl acceptor of two carbons from malonyl-ACP. Catalyzes the first condensation reaction which initiates fatty acid synthesis and may therefore play a role in governing the total rate of fatty acid production. Possesses both acetoacetyl-ACP synthase and acetyl transacylase activities. Its substrate specificity determines the biosynthesis of branched-chain and/or straight-chain of fatty acids. This Paramagnetospirillum magneticum (strain ATCC 700264 / AMB-1) (Magnetospirillum magneticum) protein is Beta-ketoacyl-[acyl-carrier-protein] synthase III.